A 569-amino-acid polypeptide reads, in one-letter code: Acetate/butyrate--CoA ligase AAE7, peroxisomal (569 aa).

Residues 567–569 carry the Microbody targeting signal motif; sequence SRL.

Belongs to the ATP-dependent AMP-binding enzyme family. As to expression, expressed in roots, leaves, stems, flowers and developing seeds.

The protein localises to the peroxisome. It carries out the reaction acetate + ATP + CoA = acetyl-CoA + AMP + diphosphate. The enzyme catalyses a medium-chain fatty acid + ATP + CoA = a medium-chain fatty acyl-CoA + AMP + diphosphate. In terms of biological role, peroxisomal acetate/butyrate--CoA ligase that is probably involved in the activation of exogenous acetate for entry into the glyoxylate cycle. May play a role to prevent carbon loss from peroxisomes during lipid mobilization. In vitro, is active with both acetate and butyrate. In Arabidopsis thaliana (Mouse-ear cress), this protein is Acetate/butyrate--CoA ligase AAE7, peroxisomal (AAE7).